The chain runs to 292 residues: Acetyl-coenzyme A carboxylase carboxyl transferase subunit beta (292 aa).

A CoA carboxyltransferase N-terminal domain is found at M36–E292. C40, C43, C59, and C62 together coordinate Zn(2+). The C4-type zinc finger occupies C40 to C62.

It belongs to the AccD/PCCB family. In terms of assembly, acetyl-CoA carboxylase is a heterohexamer composed of biotin carboxyl carrier protein (AccB), biotin carboxylase (AccC) and two subunits each of ACCase subunit alpha (AccA) and ACCase subunit beta (AccD). Requires Zn(2+) as cofactor.

The protein resides in the cytoplasm. The catalysed reaction is N(6)-carboxybiotinyl-L-lysyl-[protein] + acetyl-CoA = N(6)-biotinyl-L-lysyl-[protein] + malonyl-CoA. It participates in lipid metabolism; malonyl-CoA biosynthesis; malonyl-CoA from acetyl-CoA: step 1/1. Component of the acetyl coenzyme A carboxylase (ACC) complex. Biotin carboxylase (BC) catalyzes the carboxylation of biotin on its carrier protein (BCCP) and then the CO(2) group is transferred by the transcarboxylase to acetyl-CoA to form malonyl-CoA. This Clostridium perfringens (strain ATCC 13124 / DSM 756 / JCM 1290 / NCIMB 6125 / NCTC 8237 / Type A) protein is Acetyl-coenzyme A carboxylase carboxyl transferase subunit beta.